The chain runs to 166 residues: Phosphopantetheine adenylyltransferase (166 aa).

Substrate is bound at residue threonine 9. ATP contacts are provided by residues 9–10 and histidine 17; that span reads TF. Substrate-binding residues include lysine 41, leucine 78, and arginine 92. ATP is bound by residues 93-95, glutamate 103, and 128-134; these read GLR and HQAIASK.

Belongs to the bacterial CoaD family. In terms of assembly, homohexamer. It depends on Mg(2+) as a cofactor.

The protein localises to the cytoplasm. The enzyme catalyses (R)-4'-phosphopantetheine + ATP + H(+) = 3'-dephospho-CoA + diphosphate. Its pathway is cofactor biosynthesis; coenzyme A biosynthesis; CoA from (R)-pantothenate: step 4/5. Its function is as follows. Reversibly transfers an adenylyl group from ATP to 4'-phosphopantetheine, yielding dephospho-CoA (dPCoA) and pyrophosphate. This Roseobacter denitrificans (strain ATCC 33942 / OCh 114) (Erythrobacter sp. (strain OCh 114)) protein is Phosphopantetheine adenylyltransferase.